The primary structure comprises 412 residues: Multifunctional CCA protein (412 aa).

Glycine 8 and arginine 11 together coordinate ATP. CTP-binding residues include glycine 8 and arginine 11. Residues aspartate 21 and aspartate 23 each contribute to the Mg(2+) site. The ATP site is built by arginine 91, arginine 138, and arginine 141. Residues arginine 91, arginine 138, and arginine 141 each coordinate CTP. Positions arginine 229–tryptophan 334 constitute an HD domain.

It belongs to the tRNA nucleotidyltransferase/poly(A) polymerase family. Bacterial CCA-adding enzyme type 1 subfamily. As to quaternary structure, monomer. Can also form homodimers and oligomers. The cofactor is Mg(2+). It depends on Ni(2+) as a cofactor.

It catalyses the reaction a tRNA precursor + 2 CTP + ATP = a tRNA with a 3' CCA end + 3 diphosphate. The enzyme catalyses a tRNA with a 3' CCA end + 2 CTP + ATP = a tRNA with a 3' CCACCA end + 3 diphosphate. Functionally, catalyzes the addition and repair of the essential 3'-terminal CCA sequence in tRNAs without using a nucleic acid template. Adds these three nucleotides in the order of C, C, and A to the tRNA nucleotide-73, using CTP and ATP as substrates and producing inorganic pyrophosphate. tRNA 3'-terminal CCA addition is required both for tRNA processing and repair. Also involved in tRNA surveillance by mediating tandem CCA addition to generate a CCACCA at the 3' terminus of unstable tRNAs. While stable tRNAs receive only 3'-terminal CCA, unstable tRNAs are marked with CCACCA and rapidly degraded. This Haemophilus ducreyi (strain 35000HP / ATCC 700724) protein is Multifunctional CCA protein.